A 370-amino-acid polypeptide reads, in one-letter code: L-selectin (370 aa).

A signal peptide spans 1–28; that stretch reads MLCPWKCQNAQRGLWNVFKLWVWIMLCC. Positions 29 to 38 are excised as a propeptide; sequence DFFAHHGTDC. Residues 39-333 are Extracellular-facing; that stretch reads WTYHYSKRPM…SINEESDYNP (295 aa). A C-type lectin domain is found at 55–155; that stretch reads AFCRENYTDL…ACHKAKTALC (101 aa). Cystine bridges form between Cys57–Cys155, Cys128–Cys147, Cys128–Cys160, Cys160–Cys171, Cys165–Cys180, Cys182–Cys191, Cys197–Cys241, Cys227–Cys254, Cys259–Cys303, and Cys289–Cys316. N-linked (GlcNAc...) asparagine glycosylation is found at Asn60, Asn77, and Asn104. Ca(2+)-binding residues include Glu118, Asn120, Glu126, Asn143, and Asp144. The EGF-like domain maps to 156–192; sequence YTASCKPWSCSGHGQCVEVINNYTCNCDLGYYGPECQ. An N-linked (GlcNAc...) asparagine glycan is attached at Asn177. Sushi domains follow at residues 195–256 and 257–318; these read TQCV…TCRV and IQCE…RCQK. N-linked (GlcNAc...) asparagine glycosylation is found at Asn216, Asn226, and Asn246. Residues Asn308 and Asn320 are each glycosylated (N-linked (GlcNAc...) asparagine). A helical membrane pass occupies residues 334–354; that stretch reads LFIPVAVMVTAFSGLAFIIWL. Over 355–370 the chain is Cytoplasmic; it reads ARRLKRKSKKVSEKHG.

This sequence belongs to the selectin/LECAM family. As to quaternary structure, interaction with SELPLG/PSGL1 and PODXL2 is required for promoting recruitment and rolling of leukocytes. This interaction is dependent on the sialyl Lewis X glycan modification of SELPLG and PODXL2, and tyrosine sulfation modifications of SELPLG. Sulfation on 'Tyr-51' of SELPLG is important for L-selectin binding. Post-translationally, N-glycosylated. In terms of tissue distribution, highly expressed in lymphocytes from peripheral lymph nodes. Low in lymphocytes isolated from Peyer patches.

The protein resides in the cell membrane. Its function is as follows. Calcium-dependent lectin that mediates cell adhesion by binding to glycoproteins on neighboring cells. Mediates the adherence of lymphocytes to endothelial cells of high endothelial venules in peripheral lymph nodes. Promotes initial tethering and rolling of leukocytes in endothelia. This Bos taurus (Bovine) protein is L-selectin (SELL).